Reading from the N-terminus, the 396-residue chain is Elongation factor Tu 2 (396 aa).

The tr-type G domain occupies 10–206 (KLHVNVGTIG…ALDTFIPDPT (197 aa)). Positions 19-26 (GHVDHGKT) are G1. GTP is bound at residue 19 to 26 (GHVDHGKT). T26 contributes to the Mg(2+) binding site. The segment at 60–64 (GITIS) is G2. The G3 stretch occupies residues 81 to 84 (DCPG). GTP contacts are provided by residues 81 to 85 (DCPGH) and 136 to 139 (NKAD). The G4 stretch occupies residues 136–139 (NKAD). Positions 174 to 176 (SAR) are G5.

Belongs to the TRAFAC class translation factor GTPase superfamily. Classic translation factor GTPase family. EF-Tu/EF-1A subfamily. As to quaternary structure, monomer.

The protein resides in the cytoplasm. It carries out the reaction GTP + H2O = GDP + phosphate + H(+). Its function is as follows. GTP hydrolase that promotes the GTP-dependent binding of aminoacyl-tRNA to the A-site of ribosomes during protein biosynthesis. This Xanthomonas campestris pv. campestris (strain 8004) protein is Elongation factor Tu 2.